The sequence spans 310 residues: Nucleotide-binding protein MAP_1147 (310 aa).

30-37 (GLSGAGRG) lines the ATP pocket. 81–84 (DVRS) provides a ligand contact to GTP.

This sequence belongs to the RapZ-like family.

In terms of biological role, displays ATPase and GTPase activities. The protein is Nucleotide-binding protein MAP_1147 of Mycolicibacterium paratuberculosis (strain ATCC BAA-968 / K-10) (Mycobacterium paratuberculosis).